Consider the following 603-residue polypeptide: Putative lipase atg15 (603 aa).

Residues 1-20 (MDQPHRRTRKWHLMDLSVST) are Cytoplasmic-facing. A helical; Signal-anchor for type II membrane protein transmembrane segment spans residues 21-41 (LLMSLALVLPSCVSAYQPVYF). Over 42-603 (RSQEATPFIP…ITPAPILIDL (562 aa)) the chain is Lumenal. N-linked (GlcNAc...) asparagine glycosylation is found at N166, N201, N223, N281, and N305. S321 serves as the catalytic Charge relay system. An N-linked (GlcNAc...) asparagine glycan is attached at N467.

It belongs to the AB hydrolase superfamily. Lipase family. Binds to both phosphatidylinositol (PI) and phosphatidylinositol 3,5-bisphosphate (PIP2).

Its subcellular location is the endosome. The protein resides in the multivesicular body membrane. The protein localises to the prevacuolar compartment membrane. It carries out the reaction a triacylglycerol + H2O = a diacylglycerol + a fatty acid + H(+). Its function is as follows. Lipase which is essential for lysis of subvacuolar cytoplasm to vacuole targeted bodies and intravacuolar autophagic bodies. Involved in the lysis of intravacuolar multivesicular body (MVB) vesicles. The intravacuolar membrane disintegration by atg15 is critical to life span extension. In Emericella nidulans (strain FGSC A4 / ATCC 38163 / CBS 112.46 / NRRL 194 / M139) (Aspergillus nidulans), this protein is Putative lipase atg15 (atg15).